Here is a 900-residue protein sequence, read N- to C-terminus: DNA polymerase nu (900 aa).

Over residues 60-75 the composition is skewed to basic and acidic residues; sequence LEDRKTQSPEKKDLKS. Disordered regions lie at residues 60–90 and 863–900; these read LEDRKTQSPEKKDLKSLRSQTSRGSAKLSPQ and GPPPGPCRTESPSNSLAAPGSPASTQPPPLHFSPSFCL. Positions 76 to 90 are enriched in polar residues; the sequence is LRSQTSRGSAKLSPQ.

It belongs to the DNA polymerase type-A family. Interacts with FANCD2, FANCI, PCNA, RAD51 and HELQ. As to expression, highly expressed in testis and heart. Weakly expressed in skeletal muscle.

It localises to the nucleus. The enzyme catalyses DNA(n) + a 2'-deoxyribonucleoside 5'-triphosphate = DNA(n+1) + diphosphate. Inhibited by ddTTP. Functionally, DNA polymerase with very low fidelity that catalyzes considerable misincorporation by inserting dTTP opposite a G template, and dGTP opposite a T template. Is the least accurate of the DNA polymerase A family (i.e. POLG, POLN and POLQ). Can perform accurate translesion DNA synthesis (TLS) past a 5S-thymine glycol. Can perform efficient strand displacement past a nick or a gap and gives rise to an amount of product similar to that on non-damaged template. Has no exonuclease activity. Error-prone DNA polymerase that preferentially misincorporates dT regardless of template sequence. May play a role in TLS during interstrand cross-link (ICL) repair. May be involved in TLS when genomic replication is blocked by extremely large major groove DNA lesions. May function in the bypass of some DNA-protein and DNA-DNA cross-links. May have a role in cellular tolerance to DNA cross-linking agents. Involved in the repair of DNA cross-links and double-strand break (DSB) resistance. Participates in FANCD2-mediated repair. Forms a complex with HELQ helicase that participates in homologous recombination (HR) repair and is essential for cellular protection against DNA cross-links. The sequence is that of DNA polymerase nu (POLN) from Homo sapiens (Human).